The following is a 148-amino-acid chain: Lysozyme C (148 aa).

The signal sequence occupies residues 1–18; that stretch reads MKAPLLLGLLLLSVTVQG. The 130-residue stretch at 19–148 folds into the C-type lysozyme domain; the sequence is KVFERCDLAR…VSQYVRNCGV (130 aa). 4 cysteine pairs are disulfide-bonded: Cys24–Cys146, Cys48–Cys134, Cys83–Cys99, and Cys95–Cys113. Active-site residues include Glu53 and Asp71.

Belongs to the glycosyl hydrolase 22 family. Monomer.

The protein resides in the secreted. It catalyses the reaction Hydrolysis of (1-&gt;4)-beta-linkages between N-acetylmuramic acid and N-acetyl-D-glucosamine residues in a peptidoglycan and between N-acetyl-D-glucosamine residues in chitodextrins.. Its function is as follows. Lysozymes have primarily a bacteriolytic function; those in tissues and body fluids are associated with the monocyte-macrophage system and enhance the activity of immunoagents. This Leptonychotes weddellii (Weddell seal) protein is Lysozyme C (LYZ).